A 126-amino-acid polypeptide reads, in one-letter code: SPbeta prophage-derived uncharacterized protein YorC (126 aa).

In Bacillus subtilis (strain 168), this protein is SPbeta prophage-derived uncharacterized protein YorC (yorC).